The chain runs to 255 residues: Type III pantothenate kinase (255 aa).

6–13 (DIGNTNIV) provides a ligand contact to ATP. 107–110 (GSDC) lines the substrate pocket. Residue aspartate 109 is the Proton acceptor of the active site. Aspartate 129 serves as a coordination point for K(+). Threonine 132 lines the ATP pocket. Threonine 184 contributes to the substrate binding site.

The protein belongs to the type III pantothenate kinase family. Homodimer. Requires NH4(+) as cofactor. K(+) serves as cofactor.

The protein localises to the cytoplasm. It carries out the reaction (R)-pantothenate + ATP = (R)-4'-phosphopantothenate + ADP + H(+). It functions in the pathway cofactor biosynthesis; coenzyme A biosynthesis; CoA from (R)-pantothenate: step 1/5. In terms of biological role, catalyzes the phosphorylation of pantothenate (Pan), the first step in CoA biosynthesis. This chain is Type III pantothenate kinase, found in Bifidobacterium longum subsp. infantis (strain ATCC 15697 / DSM 20088 / JCM 1222 / NCTC 11817 / S12).